The primary structure comprises 101 residues: Protein S100-A7 (101 aa).

Ser2 bears the N-acetylserine mark. EF-hand domains lie at 8–42 (QAIT…NFPN) and 50–85 (RGRD…IATD). Residues His18 and Asp25 each coordinate Zn(2+). Ca(2+) is bound by residues Asp63, Asn65, Asp67, Lys69, and Glu74. His87 and His91 together coordinate Zn(2+).

This sequence belongs to the S-100 family. Interacts with RANBP9.

The protein localises to the cytoplasm. It is found in the secreted. The chain is Protein S100-A7 (S100A7) from Bos taurus (Bovine).